The primary structure comprises 557 residues: Inositol-3-phosphate synthase 1 (557 aa).

Positions 67, 68, 69, 70, 141, 177, 178, 188, 191, 228, 229, 230, 231, 278, 279, 303, 306, 337, 338, 339, and 352 each coordinate NAD(+). Position 279 is a phosphoserine (serine 279). Serine 357 bears the Phosphoserine mark. NAD(+) contacts are provided by glycine 390, aspartate 391, aspartate 419, and serine 420. Serine 523 carries the post-translational modification Phosphoserine. Residues 527-557 form a disordered region; sequence CKKGSAPTAPNGCTGDANGHSQAEAPQMPTT.

It belongs to the myo-inositol 1-phosphate synthase family. NAD(+) is required as a cofactor. Expressed in testis (at protein level).

Its subcellular location is the cytoplasm. The catalysed reaction is D-glucose 6-phosphate = 1D-myo-inositol 3-phosphate. Its pathway is polyol metabolism; myo-inositol biosynthesis; myo-inositol from D-glucose 6-phosphate: step 1/2. Functionally, key enzyme in myo-inositol biosynthesis pathway that catalyzes the conversion of glucose 6-phosphate to 1-myo-inositol 1-phosphate in a NAD-dependent manner. Rate-limiting enzyme in the synthesis of all inositol-containing compounds. This Bos taurus (Bovine) protein is Inositol-3-phosphate synthase 1 (ISYNA1).